The primary structure comprises 173 residues: Ribosome maturation factor RimM (173 aa).

Residues 98 to 171 (DDQYYYDEII…LITIDALEGL (74 aa)) enclose the PRC barrel domain.

The protein belongs to the RimM family. As to quaternary structure, binds ribosomal protein uS19.

It is found in the cytoplasm. Its function is as follows. An accessory protein needed during the final step in the assembly of 30S ribosomal subunit, possibly for assembly of the head region. Essential for efficient processing of 16S rRNA. May be needed both before and after RbfA during the maturation of 16S rRNA. It has affinity for free ribosomal 30S subunits but not for 70S ribosomes. The chain is Ribosome maturation factor RimM from Leuconostoc mesenteroides subsp. mesenteroides (strain ATCC 8293 / DSM 20343 / BCRC 11652 / CCM 1803 / JCM 6124 / NCDO 523 / NBRC 100496 / NCIMB 8023 / NCTC 12954 / NRRL B-1118 / 37Y).